A 184-amino-acid chain; its full sequence is Lactoylglutathione lyase (184 aa).

Ala2 carries the N-acetylalanine modification. Cysteines 19 and 20 form a disulfide. Residues 31-177 (LLQQTMLRIK…DGYWIEILNP (147 aa)) form the VOC domain. 2 residues coordinate substrate: Gln34 and Arg38. Gln34 contributes to the Zn(2+) binding site. Lys88 carries the post-translational modification N6-succinyllysine. Glu100 is a binding site for Zn(2+). Position 104 (Asn104) interacts with substrate. Residue Thr107 is modified to Phosphothreonine. Substrate-binding residues include Arg123 and His127. His127 is a binding site for Zn(2+). The residue at position 139 (Cys139) is an S-glutathionyl cysteine. Lys148 carries the post-translational modification N6-acetyllysine; alternate. Lys148 carries the N6-succinyllysine; alternate modification. Substrate is bound at residue 157–158 (KM). Glu173 lines the Zn(2+) pocket. Glu173 acts as the Proton donor/acceptor in catalysis.

Belongs to the glyoxalase I family. In terms of assembly, homodimer. Zn(2+) is required as a cofactor. Post-translationally, glutathionylation at Cys-139 inhibits enzyme activity. In terms of processing, phosphorylated at Thr-107 in the presence of CaMK2. However, this is a consensus site for phosphorylation by CK2 so phosphorylation may be mediated by CK2 rather than CaMK2. Phosphorylation is induced by TNF and suppresses the TNF-induced transcriptional activity of NF-kappa-B. Exists in a nitric oxide (NO)-modified form. The exact nature of the modification is unknown, but it suppresses the TNF-induced transcriptional activity of NF-kappa-B.

The enzyme catalyses (R)-S-lactoylglutathione = methylglyoxal + glutathione. The protein operates within secondary metabolite metabolism; methylglyoxal degradation; (R)-lactate from methylglyoxal: step 1/2. With respect to regulation, subject to competitive inhibition by methyl-gerfelin. In terms of biological role, catalyzes the conversion of hemimercaptal, formed from methylglyoxal and glutathione, to S-lactoylglutathione. Involved in the regulation of TNF-induced transcriptional activity of NF-kappa-B. Required for normal osteoclastogenesis. In Mus musculus (Mouse), this protein is Lactoylglutathione lyase (Glo1).